The chain runs to 263 residues: Probable adenylate kinase 7, mitochondrial (263 aa).

The N-terminal 30 residues, 1–30, are a transit peptide targeting the mitochondrion; sequence MAWLSRVRGVSPVTRLAAIRRSFGSAAALE. 72-77 contacts ATP; sequence GAWRHV. The segment at 92–121 is NMP; sequence SMGSLVRQELNPRSSLYKEIASAVNERKLV. Residues arginine 98, 119–121, 149–152, glutamine 156, and arginine 206 each bind AMP; these read KLV and GIPR. Position 234 (glycine 234) interacts with ATP.

It belongs to the adenylate kinase family. In terms of assembly, monomer.

It is found in the mitochondrion. The catalysed reaction is AMP + ATP = 2 ADP. Its function is as follows. Catalyzes the reversible transfer of the terminal phosphate group between ATP and AMP. Plays an important role in cellular energy homeostasis and in adenine nucleotide metabolism. The chain is Probable adenylate kinase 7, mitochondrial from Arabidopsis thaliana (Mouse-ear cress).